The primary structure comprises 364 residues: MDLVLETLDHYIFDDVYAKIAPVELQRGIDDSLVNALSLNKIVSNSTLLHETLSITNSLKRVNKDVYGLTPFLFDFTEKTYASLLPRNNLIREFFSLWAVVTVFGLLLYLITASLSYVFVFDRTIFNHPKYLKNQMYLEIKLAVSAIPTMSLLTVPWFMLELNGYSKLYYDVDWEHHGLRKLLIEYATFIFFTDCGIYLAHRWLHWPRVYKALHKPHHKWLVCTPFASHAFHPVDGYFQSLSYHIYPMILPLHKISYLILFTFVNFWSVMIHDGQHMSNNPVVNGTACHTVHHLYFNYNYGQFTTLWDRLGGSYRRPEDSLFDPKLKMDKKVLEKQARETAAYIQEVEGDDTDRVYNTDKKKTN.

The next 3 helical transmembrane spans lie at 94 to 114 (FFSLWAVVTVFGLLLYLITAS), 142 to 162 (LAVSAIPTMSLLTVPWFMLEL), and 181 to 201 (KLLIEYATFIFFTDCGIYLAH). In terms of domain architecture, Fatty acid hydroxylase spans 188–312 (TFIFFTDCGI…FTTLWDRLGG (125 aa)). Positions 201–205 (HRWLH) match the Histidine box-1 motif. The Histidine box-2 signature appears at 214–218 (HKPHH). The chain crosses the membrane as a helical span at residues 249-269 (ILPLHKISYLILFTFVNFWSV). The Histidine box-3 motif lies at 289–293 (HTVHH).

The protein belongs to the sterol desaturase family. Fe cation serves as cofactor.

The protein localises to the endoplasmic reticulum membrane. It catalyses the reaction a Delta(7)-sterol + 2 Fe(II)-[cytochrome b5] + O2 + 2 H(+) = a Delta(5),Delta(7)-sterol + 2 Fe(III)-[cytochrome b5] + 2 H2O. The protein operates within steroid metabolism; ergosterol biosynthesis; ergosterol from zymosterol: step 3/5. Catalyzes the introduction of a C-5 double bond in the B ring of ergosterol. May contribute to the regulation of ergosterol biosynthesis. The polypeptide is Delta(7)-sterol 5(6)-desaturase (ERG3) (Candida glabrata (strain ATCC 2001 / BCRC 20586 / JCM 3761 / NBRC 0622 / NRRL Y-65 / CBS 138) (Yeast)).